The chain runs to 3564 residues: CUB and sushi domain-containing protein 1 (3564 aa).

The signal sequence occupies residues 1–29 (MTAWRKFKSLLLPLVLAVLCAGLLTAAKG). Residues 30–3487 (QNCGGLVQGP…NHYQGTSSGS (3458 aa)) lie on the Extracellular side of the membrane. 10 disulfide bridges follow: Cys-32–Cys-58, Cys-145–Cys-185, Cys-171–Cys-202, Cys-208–Cys-234, Cys-349–Cys-389, Cys-375–Cys-406, Cys-411–Cys-437, Cys-527–Cys-567, Cys-553–Cys-580, and Cys-584–Cys-610. The 109-residue stretch at 32–140 (CGGLVQGPNG…QGFKAMYEVL (109 aa)) folds into the CUB 1 domain. N-linked (GlcNAc...) asparagine glycans are attached at residues Asn-40 and Asn-57. The Sushi 1 domain occupies 143 to 204 (HTCGNPGEIL…WDFPAPFCRA (62 aa)). A CUB 2 domain is found at 208 to 312 (CGGTLRGTSG…KGFNAQFQVK (105 aa)). The Sushi 2 domain occupies 347–408 (DMCPDPGIPD…WNDHRPICRA (62 aa)). Positions 411–522 (CGSNLRGPSG…PGFKAVYQEI (112 aa)) constitute a CUB 3 domain. Residues 525–582 (GGCGDPGIPAYGKRTGSSFLHGDTLTFECQAAFELVGERVITCQKNNQWSGNKPSCVF) enclose the Sushi 3 domain. Positions 584-692 (CFFNFTAPSG…RGFNITYTTF (109 aa)) constitute a CUB 4 domain. Residues Asn-587 and Asn-686 are each glycosylated (N-linked (GlcNAc...) asparagine). The Sushi 4 domain maps to 695–756 (NECHDPGIPV…WSSTVPRCEA (62 aa)). Intrachain disulfides connect Cys-697–Cys-738, Cys-723–Cys-754, Cys-758–Cys-784, Cys-873–Cys-913, Cys-899–Cys-926, and Cys-930–Cys-956. The 109-residue stretch at 758-866 (CGGHLTASSG…VGFLIHYESV (109 aa)) folds into the CUB 5 domain. The 58-residue stretch at 871-928 (DSCLDPGIPVNGQRHGSNFGIRSTVTFSCDPGYTLSDDEPLVCEKNHQWNHALPSCDA) folds into the Sushi 5 domain. The region spanning 930–1040 (CGGYIHGKSG…EGFNITFAEY (111 aa)) is the CUB 6 domain. Residues Asn-955, Asn-1015, and Asn-1034 are each glycosylated (N-linked (GlcNAc...) asparagine). In terms of domain architecture, Sushi 6 spans 1043–1102 (EPCDDPGVPAFSRRIGFQFGVGDTLAFTCFQGYRLEGATKLTCLGGGRRVWSAPLPRCVA). 3 disulfides stabilise this stretch: Cys-1045/Cys-1085, Cys-1071/Cys-1100, and Cys-1104/Cys-1130. A CUB 7 domain is found at 1104–1212 (CGASVKGNEG…QGFQLTYTSF (109 aa)). N-linked (GlcNAc...) asparagine glycans are attached at residues Asn-1184 and Asn-1197. Residues 1215–1275 (VKCEDPGIPN…WDKPMPSCVA (61 aa)) enclose the Sushi 7 domain. Intrachain disulfides connect Cys-1217–Cys-1258, Cys-1244–Cys-1273, Cys-1277–Cys-1304, Cys-1391–Cys-1431, Cys-1417–Cys-1447, Cys-1451–Cys-1477, Cys-1564–Cys-1604, Cys-1590–Cys-1621, Cys-1625–Cys-1651, Cys-1741–Cys-1781, Cys-1767–Cys-1798, and Cys-1802–Cys-1828. One can recognise a CUB 8 domain in the interval 1277 to 1386 (CGGLVHAATS…SGFSIQFSTS (110 aa)). The Sushi 8 domain maps to 1389–1449 (STCNDPGMPQ…WQPDPPSCIA (61 aa)). N-linked (GlcNAc...) asparagine glycosylation occurs at Asn-1399. The region spanning 1451–1559 (CGGNLTGPAG…SGFAIEFKEK (109 aa)) is the CUB 9 domain. N-linked (GlcNAc...) asparagine glycosylation is found at Asn-1454 and Asn-1572. The region spanning 1562 to 1623 (EACFDPGNIM…WDRALPACQA (62 aa)) is the Sushi 9 domain. In terms of domain architecture, CUB 10 spans 1625–1733 (CGGQYTGSEG…RGFHFVYQAV (109 aa)). N-linked (GlcNAc...) asparagine glycosylation is present at Asn-1644. A Sushi 10 domain is found at 1739–1800 (TQCSSVPEPR…WNDTIPSCVV (62 aa)). 3 N-linked (GlcNAc...) asparagine glycosylation sites follow: Asn-1792, Asn-1805, and Asn-1882. One can recognise a CUB 11 domain in the interval 1802–1910 (CSGNFTQRRG…AGFHLEYKTV (109 aa)). Positions 1913 to 1972 (AACQEPALPSNGIKIGDRYMVNDVLSFQCEPGYTLQGRSHISCMPGTVRRWNYPSPLCIA) constitute a Sushi 11 domain. 3 disulfides stabilise this stretch: Cys-1915–Cys-1955, Cys-1941–Cys-1970, and Cys-1974–Cys-2000. The CUB 12 domain occupies 1974 to 2082 (CGGTLTSMSG…QGFKLSYQAY (109 aa)). Asn-2018 carries N-linked (GlcNAc...) asparagine glycosylation. In terms of domain architecture, Sushi 12 spans 2085-2144 (QNCPDPPAFQNGFMINSDYSVGQSISFECYPGYILLGHPVLTCQHGTDRNWNYPFPRCDA). 3 disulfide bridges follow: Cys-2087-Cys-2127, Cys-2113-Cys-2142, and Cys-2146-Cys-2172. A CUB 13 domain is found at 2146-2257 (CGYNVTSQNG…LNFHAFQLKR (112 aa)). Asn-2149, Asn-2154, and Asn-2187 each carry an N-linked (GlcNAc...) asparagine glycan. Positions 2256 to 2317 (KRCPPPPAVP…FQGSPPTCEA (62 aa)) constitute a Sushi 13 domain. Disulfide bonds link Cys-2258–Cys-2300, Cys-2286–Cys-2315, and Cys-2319–Cys-2347. Residues 2319–2430 (CPANEVRTES…KGFKIRYAAP (112 aa)) form the CUB 14 domain. N-linked (GlcNAc...) asparagine glycosylation is found at Asn-2358, Asn-2394, Asn-2400, Asn-2445, Asn-2470, and Asn-2503. 15 consecutive Sushi domains span residues 2430-2492 (PYCS…LCQA), 2493-2554 (VSCG…TCKP), 2555-2619 (VPCP…RCKV), 2620-2677 (ISCG…RCLA), 2678-2735 (GHCG…VCVP), 2736-2793 (ITCG…ICRV), 2794-2856 (VNCS…KCLA), 2857-2914 (ISCG…HCSG), 2918-2975 (GFCG…VCEA), 2976-3034 (VSCG…DCTI), 3035-3094 (ISCG…LCKA), 3095-3152 (VLCN…QCLP), 3153-3210 (VFCG…TCID), 3214-3272 (TACP…ECIP), and 3273-3332 (HACR…VCKS). Intrachain disulfides connect Cys-2432–Cys-2473, Cys-2459–Cys-2490, Cys-2495–Cys-2537, Cys-2521–Cys-2552, Cys-2557–Cys-2602, Cys-2588–Cys-2617, Cys-2622–Cys-2662, Cys-2648–Cys-2675, Cys-2680–Cys-2720, Cys-2706–Cys-2733, Cys-2738–Cys-2778, and Cys-2764–Cys-2791. Residue Asn-2605 is glycosylated (N-linked (GlcNAc...) asparagine). 2 N-linked (GlcNAc...) asparagine glycosylation sites follow: Asn-2750 and Asn-2761. Asn-2795 carries an N-linked (GlcNAc...) asparagine glycan. Intrachain disulfides connect Cys-2796-Cys-2841, Cys-2827-Cys-2854, Cys-2859-Cys-2899, Cys-2885-Cys-2912, Cys-2920-Cys-2960, Cys-2946-Cys-2973, Cys-2978-Cys-3019, Cys-3005-Cys-3032, Cys-3037-Cys-3079, Cys-3063-Cys-3092, Cys-3097-Cys-3137, Cys-3123-Cys-3150, Cys-3155-Cys-3195, Cys-3181-Cys-3208, Cys-3216-Cys-3257, Cys-3243-Cys-3270, Cys-3275-Cys-3317, and Cys-3302-Cys-3330. Residue Asn-2894 is glycosylated (N-linked (GlcNAc...) asparagine). Asn-2963 carries an N-linked (GlcNAc...) asparagine glycan. 3 N-linked (GlcNAc...) asparagine glycosylation sites follow: Asn-3022, Asn-3056, and Asn-3086. Residues Asn-3228 and Asn-3260 are each glycosylated (N-linked (GlcNAc...) asparagine). Asn-3339, Asn-3379, and Asn-3386 each carry an N-linked (GlcNAc...) asparagine glycan. A helical membrane pass occupies residues 3488 to 3508 (VAAAILVPFFALILSGFAFYL). At 3509–3564 (YKHRTRPKVQYNGYAGHENSNGQASFENPMYDTNLKPTEAKAVRFDTTLNTVCTVV) the chain is on the cytoplasmic side.

Belongs to the CSMD family.

The protein localises to the membrane. The chain is CUB and sushi domain-containing protein 1 (Csmd1) from Mus musculus (Mouse).